The chain runs to 341 residues: Ribosomal RNA small subunit methyltransferase C (341 aa).

The protein belongs to the methyltransferase superfamily. RsmC family. In terms of assembly, monomer.

The protein localises to the cytoplasm. The catalysed reaction is guanosine(1207) in 16S rRNA + S-adenosyl-L-methionine = N(2)-methylguanosine(1207) in 16S rRNA + S-adenosyl-L-homocysteine + H(+). In terms of biological role, specifically methylates the guanine in position 1207 of 16S rRNA in the 30S particle. This Shewanella pealeana (strain ATCC 700345 / ANG-SQ1) protein is Ribosomal RNA small subunit methyltransferase C.